Reading from the N-terminus, the 249-residue chain is Leucyl/phenylalanyl-tRNA--protein transferase (249 aa).

The interval 1-21 is disordered; sequence MSRTLPHLLSPDPASPFPPAE.

This sequence belongs to the L/F-transferase family.

It is found in the cytoplasm. The enzyme catalyses N-terminal L-lysyl-[protein] + L-leucyl-tRNA(Leu) = N-terminal L-leucyl-L-lysyl-[protein] + tRNA(Leu) + H(+). It catalyses the reaction N-terminal L-arginyl-[protein] + L-leucyl-tRNA(Leu) = N-terminal L-leucyl-L-arginyl-[protein] + tRNA(Leu) + H(+). The catalysed reaction is L-phenylalanyl-tRNA(Phe) + an N-terminal L-alpha-aminoacyl-[protein] = an N-terminal L-phenylalanyl-L-alpha-aminoacyl-[protein] + tRNA(Phe). In terms of biological role, functions in the N-end rule pathway of protein degradation where it conjugates Leu, Phe and, less efficiently, Met from aminoacyl-tRNAs to the N-termini of proteins containing an N-terminal arginine or lysine. The chain is Leucyl/phenylalanyl-tRNA--protein transferase from Xanthomonas campestris pv. campestris (strain B100).